We begin with the raw amino-acid sequence, 394 residues long: Phosphopentomutase (394 aa).

Residues Asp14, Asp287, His292, Asp328, His329, and His340 each coordinate Mn(2+).

Belongs to the phosphopentomutase family. The cofactor is Mn(2+).

It localises to the cytoplasm. It catalyses the reaction 2-deoxy-alpha-D-ribose 1-phosphate = 2-deoxy-D-ribose 5-phosphate. The enzyme catalyses alpha-D-ribose 1-phosphate = D-ribose 5-phosphate. The protein operates within carbohydrate degradation; 2-deoxy-D-ribose 1-phosphate degradation; D-glyceraldehyde 3-phosphate and acetaldehyde from 2-deoxy-alpha-D-ribose 1-phosphate: step 1/2. In terms of biological role, isomerase that catalyzes the conversion of deoxy-ribose 1-phosphate (dRib-1-P) and ribose 1-phosphate (Rib-1-P) to deoxy-ribose 5-phosphate (dRib-5-P) and ribose 5-phosphate (Rib-5-P), respectively. The protein is Phosphopentomutase of Listeria monocytogenes serotype 4b (strain CLIP80459).